We begin with the raw amino-acid sequence, 87 residues long: Small ribosomal subunit protein bS20 (87 aa).

Basic residues predominate over residues 1–11 (MANHKSALKRI). A disordered region spans residues 1–23 (MANHKSALKRIKQTEKRTERNRH).

Belongs to the bacterial ribosomal protein bS20 family.

Binds directly to 16S ribosomal RNA. This chain is Small ribosomal subunit protein bS20, found in Geotalea uraniireducens (strain Rf4) (Geobacter uraniireducens).